The sequence spans 440 residues: Phosphatidylcholine-sterol acyltransferase (440 aa).

An N-terminal signal peptide occupies residues 1-24; sequence MGPPGSPWQWVLLLLGLLLPPAAP. The N-linked (GlcNAc...) asparagine glycan is linked to N44. C74 and C98 are oxidised to a cystine. N-linked (GlcNAc...) asparagine glycosylation is present at N108. S205 functions as the Nucleophile in the catalytic mechanism. A glycan (N-linked (GlcNAc...) asparagine) is linked at N296. A disulfide bond links C337 and C380. Residues D369 and H401 each act as charge relay system in the active site. N408 carries N-linked (GlcNAc...) asparagine glycosylation.

This sequence belongs to the AB hydrolase superfamily. Lipase family. In terms of tissue distribution, detected in blood plasma (at protein level). Highly expressed in liver.

It is found in the secreted. The catalysed reaction is a sterol + a 1,2-diacyl-sn-glycero-3-phosphocholine = a sterol ester + a 1-acyl-sn-glycero-3-phosphocholine. It catalyses the reaction a 1-O-alkyl-2-acetyl-sn-glycero-3-phosphocholine + H2O = a 1-O-alkyl-sn-glycero-3-phosphocholine + acetate + H(+). It carries out the reaction a 1-hexadecanoyl-2-acyl-sn-glycero-3-phosphocholine + (24S)-hydroxycholesterol = (24S)-24-hydroxycholesterol ester + 1-hexadecanoyl-sn-glycero-3-phosphocholine. The enzyme catalyses (24S)-hydroxycholesterol + 1-hexadecanoyl-2-(9Z,12Z-octadecadienoyl)-sn-glycero-3-phosphocholine = (24S)-hydroxycholesterol 3-linoleoate + 1-hexadecanoyl-sn-glycero-3-phosphocholine. The catalysed reaction is 1-hexadecanoyl-2-(5Z,8Z,11Z,14Z-eicosatetraenoyl)-sn-glycero-3-phosphocholine + cholesterol = cholesteryl (5Z,8Z,11Z,14Z)-eicosatetraenoate + 1-hexadecanoyl-sn-glycero-3-phosphocholine. It catalyses the reaction 1-hexadecanoyl-2-(9Z-octadecenoyl)-sn-glycero-3-phosphocholine + cholesterol = cholesteryl (9Z-octadecenoate) + 1-hexadecanoyl-sn-glycero-3-phosphocholine. It carries out the reaction 1-hexadecanoyl-2-(8Z,11Z,14Z-eicosatrienoyl)-sn-glycero-3-phosphocholine + cholesterol = cholesteryl (8Z,11Z,14Z)-eicosatrienoate + 1-hexadecanoyl-sn-glycero-3-phosphocholine. The enzyme catalyses 1-hexadecanoyl-2-(5Z,8Z,11Z-eicosatrienoyl)-sn-glycero-3-phosphocholine + cholesterol = cholesteryl (5Z,8Z,11Z)-eicosatrienoate + 1-hexadecanoyl-sn-glycero-3-phosphocholine. The catalysed reaction is 1-hexadecanoyl-2-(5Z,8Z,11Z,14Z,17Z-eicosapentaenoyl)-sn-glycero-3-phosphocholine + cholesterol = (5Z,8Z,11Z,14Z,17Z-eicosapentaenoyl)-cholesterol + 1-hexadecanoyl-sn-glycero-3-phosphocholine. It catalyses the reaction 1-hexadecanoyl-2-(9Z,12Z-octadecadienoyl)-sn-glycero-3-phosphocholine + cholesterol = cholesteryl (9Z,12Z)-octadecadienoate + 1-hexadecanoyl-sn-glycero-3-phosphocholine. It carries out the reaction 1-hexadecanoyl-2-(6Z,9Z,12Z-octadecatrienoyl)-sn-glycero-3-phosphocholine + cholesterol = (6Z,9Z,12Z-octadecatrienoyl)-cholesterol + 1-hexadecanoyl-sn-glycero-3-phosphocholine. The enzyme catalyses 1-hexadecanoyl-2-(11Z,14Z,17Z-eicosatrienoyl)-sn-glycero-3-phosphocholine + cholesterol = (11Z,14Z,17Z-eicosatrienoyl)-cholesterol + 1-hexadecanoyl-sn-glycero-3-phosphocholine. The catalysed reaction is 1-hexadecanoyl-2-(9Z,12Z,15Z-octadecatrienoyl)-sn-glycero-3-phosphocholine + cholesterol = (9Z,12Z,15Z-octadecatrienoyl)-cholesterol + 1-hexadecanoyl-sn-glycero-3-phosphocholine. It catalyses the reaction 1-hexadecanoyl-2-(9Z,12Z-octadecadienoyl)-sn-glycero-3-phosphocholine + H2O = (9Z,12Z)-octadecadienoate + 1-hexadecanoyl-sn-glycero-3-phosphocholine + H(+). It carries out the reaction 1-hexadecanoyl-2-(5Z,8Z,11Z,14Z-eicosatetraenoyl)-sn-glycero-3-phosphocholine + H2O = 1-hexadecanoyl-sn-glycero-3-phosphocholine + (5Z,8Z,11Z,14Z)-eicosatetraenoate + H(+). The enzyme catalyses a 1-O-alkyl-2-acetyl-sn-glycero-3-phosphocholine + 1-hexadecanoyl-sn-glycero-3-phosphocholine = 1-hexadecanoyl-2-acetyl-sn-glycero-3-phosphocholine + a 1-O-alkyl-sn-glycero-3-phosphocholine. Functionally, central enzyme in the extracellular metabolism of plasma lipoproteins. Synthesized mainly in the liver and secreted into plasma where it converts cholesterol and phosphatidylcholines (lecithins) to cholesteryl esters and lysophosphatidylcholines on the surface of high and low density lipoproteins (HDLs and LDLs). The cholesterol ester is then transported back to the liver. Also produced in the brain by primary astrocytes, and esterifies free cholesterol on nascent APOE-containing lipoproteins secreted from glia and influences cerebral spinal fluid (CSF) APOE- and APOA1 levels. Together with APOE and the cholesterol transporter ABCA1, plays a key role in the maturation of glial-derived, nascent lipoproteins. Required for remodeling high-density lipoprotein particles into their spherical forms. Has a preference for plasma 16:0-18:2 or 18:O-18:2 phosphatidylcholines. Catalyzes the hydrolysis of 1-O-alkyl-2-acetyl-sn-glycero-3-phosphocholine (platelet-activating factor or PAF) to 1-O-alkyl-sn-glycero-3-phosphocholine (lyso-PAF). Also catalyzes the transfer of the acetate group from PAF to 1-hexadecanoyl-sn-glycero-3-phosphocholine forming lyso-PAF. Catalyzes the esterification of (24S)-hydroxycholesterol (24(S)OH-C), also known as cerebrosterol to produce 24(S)OH-C monoesters. The protein is Phosphatidylcholine-sterol acyltransferase (LCAT) of Oryctolagus cuniculus (Rabbit).